The primary structure comprises 303 residues: Protein UL24 homolog (303 aa).

The span at 235–249 (KFRDRTNKKSNDQLR) shows a compositional bias: basic and acidic residues. The disordered stretch occupies residues 235 to 280 (KFRDRTNKKSNDQLRARQANARPCKKKQHNNKRLRNNRKHGGKVSR). The segment covering 257–277 (PCKKKQHNNKRLRNNRKHGGK) has biased composition (basic residues).

Belongs to the herpesviridae UL24 family.

The protein resides in the virion. It localises to the host cytoplasm. It is found in the host nucleus. Its subcellular location is the host nucleolus. The protein localises to the host Golgi apparatus. Its function is as follows. May participate in nuclear egress of viral particles. Plays a role in the dispersal of several host nucleolar proteins including NCL/nucleolin and NPM1. Since deletion of host NCL/nucleolin negatively impact on nuclear egress, UL24 supposedly acts on this process through its effect on host nucleoli. This Saimiri sciureus (Common squirrel monkey) protein is Protein UL24 homolog (20).